We begin with the raw amino-acid sequence, 275 residues long: Myoblast determination protein 1 homolog (275 aa).

Positions Asp84–Leu135 constitute a bHLH domain. The segment at Glu234 to Leu275 is disordered. The span at Leu249–Leu275 shows a compositional bias: polar residues.

Efficient DNA binding requires dimerization with another bHLH protein. As to expression, from mid-gastrula to just before somite formation, expressed in cells adjacent to axial mesoderm. Subsequently, during the anterior-to-posterior wave of somite formation and maturation, expressed within particular regions of each somite. Expressed in both muscle and non-muscle cells.

Its subcellular location is the nucleus. In terms of biological role, may act as a transcriptional activator that promotes transcription of muscle-specific target genes and plays a role in muscle differentiation. This Danio rerio (Zebrafish) protein is Myoblast determination protein 1 homolog (myod1).